The sequence spans 157 residues: Endoribonuclease YbeY (157 aa).

Residues His118, His122, and His128 each contribute to the Zn(2+) site.

The protein belongs to the endoribonuclease YbeY family. Requires Zn(2+) as cofactor.

It localises to the cytoplasm. Single strand-specific metallo-endoribonuclease involved in late-stage 70S ribosome quality control and in maturation of the 3' terminus of the 16S rRNA. The polypeptide is Endoribonuclease YbeY (Bordetella parapertussis (strain 12822 / ATCC BAA-587 / NCTC 13253)).